Reading from the N-terminus, the 569-residue chain is Amyloid-beta A4 precursor protein-binding family A member 3 (569 aa).

M1 is subject to N-acetylmethionine. Disordered regions lie at residues 1-53 and 124-168; these read MEFL…MELD and AQSV…SSPE. The segment covering 19 to 32 has biased composition (basic and acidic residues); sequence EEPKGPEVPSEDHP. Low complexity predominate over residues 132 to 141; the sequence is AQAAPRLLQP. 2 positions are modified to phosphoserine: S166 and S367. A PID domain is found at 212 to 376; the sequence is DGVLFGAKYL…SASASHPHNG (165 aa). PDZ domains are found at residues 389-475 and 480-554; these read EVCI…IIHC and TAVI…TMPA.

Binds to the cytoplasmic domain of amyloid protein (APP). Interacts with HIF1AN (via N-terminus). Interacts with NECAB3; seems to mediate the interaction between NECAB3 and HIF1AN. Ubiquitous.

It is found in the cytoplasm. It localises to the perinuclear region. Functionally, may modulate processing of the amyloid-beta precursor protein (APP) and hence formation of APP-beta. May enhance the activity of HIF1A in macrophages by inhibiting the activity of HIF1AN. In Rattus norvegicus (Rat), this protein is Amyloid-beta A4 precursor protein-binding family A member 3 (Apba3).